Consider the following 198-residue polypeptide: Iron-sulfur flavoprotein MJ0731 (198 aa).

Cys46, Cys49, Cys52, and Cys59 together coordinate [4Fe-4S] cluster.

It belongs to the SsuE family. Isf subfamily. Homodimer. FMN serves as cofactor. Requires [4Fe-4S] cluster as cofactor.

Functionally, redox-active protein probably involved in electron transport. The sequence is that of Iron-sulfur flavoprotein MJ0731 from Methanocaldococcus jannaschii (strain ATCC 43067 / DSM 2661 / JAL-1 / JCM 10045 / NBRC 100440) (Methanococcus jannaschii).